Here is a 1757-residue protein sequence, read N- to C-terminus: Serine/threonine-protein kinase WNK3 (1757 aa).

The tract at residues 1 to 25 (MATDSGEPASTEDSEKPDGVSFENR) is disordered. The residue at position 62 (Ser-62) is a Phosphoserine. Basic and acidic residues predominate over residues 66–82 (TEDDKVAESSRRDERKA). The interval 66–85 (TEDDKVAESSRRDERKAATN) is disordered. A Protein kinase domain is found at 146–404 (LKFDIELGRG…IKDLLNHAFF (259 aa)). ATP contacts are provided by residues 226-229 (TELM) and Lys-276. Asp-293 acts as the Proton acceptor in catalysis. A phosphoserine; by autocatalysis mark is found at Ser-303 and Ser-307. The tract at residues 536-546 (EYEETEVDQHV) is interaction with KLHL3. Position 540 is a phosphothreonine (Thr-540). Polar residues-rich tracts occupy residues 551–570 (LQGK…SSEP), 578–604 (SDTS…KLTQ), and 674–689 (SVKE…SGNG). 2 disordered regions span residues 551 to 604 (LQGK…KLTQ) and 674 to 705 (SVKE…PRPE). Ser-1039 carries the post-translational modification Phosphoserine. Positions 1404–1422 (VATEKNVTSTTEVSVQSGS) are enriched in polar residues. 3 disordered regions span residues 1404-1440 (VATE…QTCT), 1479-1498 (SLFY…EIED), and 1536-1574 (ATKD…MTHS). Positions 1479 to 1491 (SLFYSPSSPMSSD) are enriched in low complexity. Phosphoserine occurs at positions 1550 and 1553. Over residues 1555–1566 (RRPRSFKSKLRS) the composition is skewed to basic residues. Phosphoserine is present on Ser-1595. Disordered stretches follow at residues 1621 to 1650 (HFPS…CEST) and 1734 to 1757 (PGMN…PGPK). The span at 1624–1637 (SKPSLNQLKQSQQK) shows a compositional bias: low complexity. Positions 1641 to 1650 (ENWNKSCEST) are enriched in polar residues. Residues 1742 to 1757 (PAPPVQNPASIPPGPK) are compositionally biased toward pro residues.

This sequence belongs to the protein kinase superfamily. Ser/Thr protein kinase family. WNK subfamily. As to quaternary structure, interacts with WNK1 and WNK4. The cofactor is Mg(2+). In terms of processing, autophosphorylated at Ser-303 and Ser-307, promoting its activity. Phosphorylation at Thr-540 prevents interaction with KLHL3 and subsequent ubiquitination and degradation by the BCR(KLHL3) complex. Ubiquitinated by the BCR(KLHL2) complex, leading to its degradation. Ubiquitinated by the BCR(KLHL3) complex, leading to its degradation. In terms of tissue distribution, expressed in pancreatic duct.

Its subcellular location is the cytoplasm. It carries out the reaction L-seryl-[protein] + ATP = O-phospho-L-seryl-[protein] + ADP + H(+). The catalysed reaction is L-threonyl-[protein] + ATP = O-phospho-L-threonyl-[protein] + ADP + H(+). Its activity is regulated as follows. Activated in response to hyperosmotic stress: cell shrinkage promotes formation of a membraneless compartment that concentrates WNK3 with its substrates, OXSR1/OSR1 and STK39/SPAK. Activation requires autophosphorylation of Ser-307 and, to a lower extent, Ser-303. Autophosphorylation and subsequent activation is inhibited by increases in intracellular ionic strength: Cl(-) potently inhibits WNK3 kinase activity via direct binding. Also inhibited by K(+) ions. Kinase activity is inhibited by WNK4. Functionally, serine/threonine-protein kinase component of the WNK3-SPAK/OSR1 kinase cascade, which plays an important role in the regulation of electrolyte homeostasis and regulatory volume increase in response to hyperosmotic stress. WNK3 mediates regulatory volume increase in response to hyperosmotic stress by acting as a molecular crowding sensor, which senses cell shrinkage and mediates formation of a membraneless compartment by undergoing liquid-liquid phase separation. The membraneless compartment concentrates WNK3 with its substrates, OXSR1/OSR1 and STK39/SPAK, promoting WNK3-dependent phosphorylation and activation of downstream kinases OXSR1/OSR1 and STK39/SPAK. Following activation, OXSR1/OSR1 and STK39/SPAK catalyze phosphorylation of ion cotransporters SLC12A1/NKCC2, SLC12A2/NKCC1, SLC12A3/NCC, SLC12A4/KCC1, SLC12A5/KCC2 or SLC12A6/KCC3, regulating their activity. Phosphorylation of Na-K-Cl cotransporters SLC12A2/NKCC1 and SLC12A2/NKCC1 promote their activation and ion influx; simultaneously, phosphorylation of K-Cl cotransporters SLC12A4/KCC1, SLC12A5/KCC2 and SLC12A6/KCC3 inhibits its activity, blocking ion efflux. Phosphorylates WNK4, possibly regulating the activity of SLC12A3/NCC. May also phosphorylate NEDD4L. Also acts as a scaffold protein independently of its protein kinase activity: negatively regulates cell membrane localization of various transporters and channels, such as KCNJ1 and SLC26A9. Increases Ca(2+) influx mediated by TRPV5 and TRPV6 by enhancing their membrane expression level via a kinase-dependent pathway. The polypeptide is Serine/threonine-protein kinase WNK3 (Mus musculus (Mouse)).